The primary structure comprises 350 residues: Phosphate acyltransferase (350 aa).

It belongs to the PlsX family. As to quaternary structure, homodimer. Probably interacts with PlsY.

The protein resides in the cytoplasm. The catalysed reaction is a fatty acyl-[ACP] + phosphate = an acyl phosphate + holo-[ACP]. It functions in the pathway lipid metabolism; phospholipid metabolism. In terms of biological role, catalyzes the reversible formation of acyl-phosphate (acyl-PO(4)) from acyl-[acyl-carrier-protein] (acyl-ACP). This enzyme utilizes acyl-ACP as fatty acyl donor, but not acyl-CoA. The protein is Phosphate acyltransferase of Phenylobacterium zucineum (strain HLK1).